A 78-amino-acid chain; its full sequence is Defensin-like protein 201 (78 aa).

Positions Met-1 to Ala-22 are cleaved as a signal peptide. 4 disulfides stabilise this stretch: Cys-32/Cys-78, Cys-41/Cys-61, Cys-46/Cys-71, and Cys-50/Cys-73.

This sequence belongs to the DEFL family.

Its subcellular location is the secreted. This is Defensin-like protein 201 from Arabidopsis thaliana (Mouse-ear cress).